Reading from the N-terminus, the 446-residue chain is 5-methylthioadenosine/S-adenosylhomocysteine deaminase (446 aa).

Zn(2+)-binding residues include His72 and His74. Substrate is bound by residues Glu101 and His194. His221 is a binding site for Zn(2+). Residues Glu224 and Asp309 each contribute to the substrate site. Position 309 (Asp309) interacts with Zn(2+).

This sequence belongs to the metallo-dependent hydrolases superfamily. MTA/SAH deaminase family. Zn(2+) serves as cofactor.

It catalyses the reaction S-adenosyl-L-homocysteine + H2O + H(+) = S-inosyl-L-homocysteine + NH4(+). The enzyme catalyses S-methyl-5'-thioadenosine + H2O + H(+) = S-methyl-5'-thioinosine + NH4(+). Its function is as follows. Catalyzes the deamination of 5-methylthioadenosine and S-adenosyl-L-homocysteine into 5-methylthioinosine and S-inosyl-L-homocysteine, respectively. Is also able to deaminate adenosine. This is 5-methylthioadenosine/S-adenosylhomocysteine deaminase from Saccharophagus degradans (strain 2-40 / ATCC 43961 / DSM 17024).